The primary structure comprises 930 residues: Probable SapB synthase (930 aa).

A Protein kinase domain is found at 256-516 (YTVESALHFS…GSTRADETTR (261 aa)). ATP is bound by residues 262 to 270 (LHFSNGGGV) and lysine 285. Aspartate 395 functions as the Proton acceptor in the catalytic mechanism. The helical transmembrane segment at 447-467 (YALACLRIVLFLPLTSLLAVD) threads the bilayer. The span at 501 to 527 (GSTRVDGSTRADETTRADETTRLDVTT) shows a compositional bias: basic and acidic residues. 2 disordered regions span residues 501 to 558 (GSTR…RDSM) and 911 to 930 (PFLP…HQEP). Low complexity predominate over residues 532–546 (APDAARRPAGPVAPV). Basic and acidic residues predominate over residues 547-556 (RPDDWPRSRD).

The protein in the N-terminal section; belongs to the protein kinase superfamily.

The protein resides in the cell membrane. Its function is as follows. Required for aerial hyphae formation. Probably involved in processing the precursor of SapB to its mature form. This chain is Probable SapB synthase, found in Streptomyces coelicolor (strain ATCC BAA-471 / A3(2) / M145).